A 423-amino-acid chain; its full sequence is COP9 signalosome complex subunit 3 (423 aa).

The residue at position 2 (alanine 2) is an N-acetylalanine. The PCI domain occupies 197 to 365; that stretch reads NFERALYFYE…GMVSFHDNPE (169 aa). A disordered region spans residues 402 to 423; sequence QFVQKSMGSQEDDSGNKPSSYS. Residues serine 407, serine 410, and serine 423 each carry the phosphoserine modification.

Belongs to the CSN3 family. In terms of assembly, component of the CSN complex, composed of COPS1/GPS1, COPS2, COPS3, COPS4, COPS5, COPS6, COPS7 (COPS7A or COPS7B), COPS8 and COPS9. In the complex, it probably interacts directly with COPS1, COPS4, COPS8 and COPS9. Interacts with CK2 and PKD. Interacts with the translation initiation factor EIF3S6 and IKBKG. Interacts with ERCC6.

It is found in the cytoplasm. Its subcellular location is the nucleus. Its function is as follows. Component of the COP9 signalosome complex (CSN), a complex involved in various cellular and developmental processes. The CSN complex is an essential regulator of the ubiquitin (Ubl) conjugation pathway by mediating the deneddylation of the cullin subunits of SCF-type E3 ligase complexes, leading to decrease the Ubl ligase activity of SCF-type complexes such as SCF, CSA or DDB2. The complex is also involved in phosphorylation of p53/TP53, c-jun/JUN, IkappaBalpha/NFKBIA, ITPK1 and IRF8/ICSBP, possibly via its association with CK2 and PKD kinases. CSN-dependent phosphorylation of TP53 and JUN promotes and protects degradation by the Ubl system, respectively. Essential to maintain the survival of epiblast cells and thus the development of the postimplantation embryo. In Rattus norvegicus (Rat), this protein is COP9 signalosome complex subunit 3 (Cops3).